The chain runs to 450 residues: Na(+)/H(+) antiporter NhaA 1 (450 aa).

The next 11 membrane-spanning stretches (helical) occupy residues 35-55, 79-99, 117-137, 143-163, 173-193, 198-218, 224-244, 320-340, 356-376, 392-412, and 423-443; these read SSLFLLFATIIALWWANSDYA, LKHIINDGLMVIFFFLLGLEI, LIICAMGGMVCPALIYSGFNW, IGWGIPMATDTAFALGVLTMV, AFIVGLAIVDDVGAILVIAIF, ISLMHLLSACALIGFLGVANY, PLFYFIIGVAAWWAMLKSGVH, LPVVLFILPLFALANAGVVIN, IISGLILGKLIGISGACWFAL, VIGASLIAGIGFTMSTFIATL, and VAKTSILLASVLTAILGLLYL.

Belongs to the NhaA Na(+)/H(+) (TC 2.A.33) antiporter family.

The protein localises to the cell inner membrane. It carries out the reaction Na(+)(in) + 2 H(+)(out) = Na(+)(out) + 2 H(+)(in). Its function is as follows. Na(+)/H(+) antiporter that extrudes sodium in exchange for external protons. This Shewanella denitrificans (strain OS217 / ATCC BAA-1090 / DSM 15013) protein is Na(+)/H(+) antiporter NhaA 1.